A 918-amino-acid polypeptide reads, in one-letter code: Band 3 anion exchange protein (918 aa).

Positions 1-48 (MENDLSFGEDVMSYEEESDSAFPSPIRPTPPGHSGNYDLEQSRQEEDS) are disordered. Residues 1–392 (MENDLSFGED…ISDFTDALDP (392 aa)) are Cytoplasmic-facing. Residues 393 to 416 (QVLAAVIFIYFAALSPAITFGGLL) traverse the membrane as a helical segment. Over 417 to 424 (ADKTEHMM) the chain is Extracellular. The helical transmembrane segment at 425 to 445 (GVSELMISTCVQGIIFAFIAA) threads the bilayer. Residues 446–448 (QPT) are Cytoplasmic-facing. The chain crosses the membrane as a discontinuously helical span at residues 449 to 465 (LVIGFSGPLLVFEEAFF). At 466-474 (AFCKSQEIE) the chain is on the extracellular side. The helical transmembrane segment at 475–495 (YIVGRIWVGLWLVIIVVVIVA) threads the bilayer. Topologically, residues 496 to 507 (VEGSFLVKFISR) are cytoplasmic. A helical transmembrane segment spans residues 508-530 (FTQEIFSILISLIFIYETFSKLG). The Extracellular portion of the chain corresponds to 531-583 (KIFKAHPLVLNYEHLNDSLDNPFHPVVKEHIEYHEDGNKTVHEVIHERAYPNT). N-linked (GlcNAc...) asparagine glycosylation is found at asparagine 546 and asparagine 568. A helical transmembrane segment spans residues 584–604 (ALLSMCLMFGCFFIAYFLRQF). At 605–615 (KNGHFLPGPIR) the chain is on the cytoplasmic side. Residues 616 to 636 (RMIGDFGVPIAIFFMIAVDIT) form a helical membrane-spanning segment. At 637–676 (IEDAYTQKLVVPKGLMVSNPNARGWFINPLGEKKPFPAWM) the chain is on the extracellular side. A helical membrane pass occupies residues 677–697 (MGACCVPALLVFILIFLESQI). The Cytoplasmic segment spans residues 698–713 (TTLIVSKPERKMVKGS). Residues 714–732 (GFHLDLLILVTMGGIASLF) form a helical membrane-spanning segment. The discontinuously helical transmembrane segment at 733 to 750 (GVPWLSAATVRSVTHANA) threads the bilayer. Residues 751 to 769 (LTVMSKGPKPEIEKVLEQR) lie on the Cytoplasmic side of the membrane. 2 helical membrane passes run 770 to 790 (ISGMLVAAMVGVSILLEPILK) and 791 to 809 (MIPMTALFGIFLYMGITSL). The Cytoplasmic portion of the chain corresponds to 810 to 847 (SGIQMWDRMLLLIVPRKYYPADAYAQRVTTMKMHLFTL). Positions 848–878 (IQMVCLGALWMVKMSAFSLALPFVLILTIPL) form an intramembrane region, discontinuously helical. Residue cysteine 852 is the site of S-palmitoyl cysteine attachment. Residues 879–918 (RMAITGTLFTDKEMKCLDASDGKVKFEEEPGEDMYESPLP) are Cytoplasmic-facing.

It belongs to the anion exchanger (TC 2.A.31) family. As to quaternary structure, a dimer in solution, it spans the membrane asymmetrically and appears to be tetrameric.

The protein resides in the cell membrane. It catalyses the reaction hydrogencarbonate(in) + chloride(out) = hydrogencarbonate(out) + chloride(in). Functions both as a transporter that mediates electroneutral anion exchange across the cell membrane and as a structural protein. Major integral membrane glycoprotein of the erythrocyte membrane; required for normal flexibility and stability of the erythrocyte membrane and for normal erythrocyte shape via the interactions of its cytoplasmic domain with cytoskeletal proteins, glycolytic enzymes, and hemoglobin. Functions as a transporter that mediates the 1:1 exchange of inorganic anions across the erythrocyte membrane. Mediates chloride-bicarbonate exchange in the kidney, and is required for normal acidification of the urine. This is Band 3 anion exchange protein (slc4a1) from Oncorhynchus mykiss (Rainbow trout).